Here is a 245-residue protein sequence, read N- to C-terminus: Mannose/glucose-specific lectin (245 aa).

A carbohydrate-binding residues include aspartate 87 and glycine 107. An N-linked (GlcNAc...) asparagine glycan is attached at asparagine 119. 2 residues coordinate Mn(2+): glutamate 129 and aspartate 131. 2 residues coordinate Ca(2+): aspartate 131 and phenylalanine 133. Residues serine 138 and asparagine 139 each coordinate a carbohydrate. Ca(2+)-binding residues include asparagine 139 and aspartate 142. Residues aspartate 142 and histidine 147 each coordinate Mn(2+). Glycine 221, glutamate 222, and glutamine 223 together coordinate a carbohydrate.

The protein belongs to the leguminous lectin family. As to quaternary structure, homodimer.

In terms of biological role, mannose/glucose-specific lectin that also binds derivatives N-acetyl-D-glucosamine and alpha-methyl-D-mannopyranoside with even higher affinity. Has hemagglutinating activity towards rabbit erythrocytes. Is toxic towards brine shrimp A.nauplii. In rats, induces dose-dependent paw edema. The chain is Mannose/glucose-specific lectin from Centrolobium tomentosum (Arariba).